The primary structure comprises 275 residues: 2,3,4,5-tetrahydropyridine-2,6-dicarboxylate N-succinyltransferase (275 aa).

Substrate is bound by residues Arg-106 and Asp-143.

The protein belongs to the transferase hexapeptide repeat family. Homotrimer.

Its subcellular location is the cytoplasm. The enzyme catalyses (S)-2,3,4,5-tetrahydrodipicolinate + succinyl-CoA + H2O = (S)-2-succinylamino-6-oxoheptanedioate + CoA. It functions in the pathway amino-acid biosynthesis; L-lysine biosynthesis via DAP pathway; LL-2,6-diaminopimelate from (S)-tetrahydrodipicolinate (succinylase route): step 1/3. This Burkholderia ambifaria (strain ATCC BAA-244 / DSM 16087 / CCUG 44356 / LMG 19182 / AMMD) (Burkholderia cepacia (strain AMMD)) protein is 2,3,4,5-tetrahydropyridine-2,6-dicarboxylate N-succinyltransferase.